Reading from the N-terminus, the 537-residue chain is MEKKECPEKSSSSEEELPRRDSGSSRNIDASKLIRLQGSRKLLVDNSIRELQYTKTGIFFQAEACVTNDTVYRELPCVSETLCDISHFFQEDDETEAEPLLFRAVPECQLSGGDIPSVSEEQESSEGQDSGDICSEENQIVSSYASKVCFEIEEDYKNRQFLGPEGNVDVELIDKSTNRYSVWFPTAGWYLWSATGLGFLVRDEVTVTIAFGSWSQHLALDLQHHEQWLVGGPLFDVTAEPEEAVAEIHLPHFISLQAGEVDVSWFLVAHFKNEGMVLEHPARVEPFYAVLESPSFSLMGILLRIASGTRLSIPITSNTLIYYHPHPEDIKFHLYLVPSDALLTKAIDDEEDRFHGVRLQTSPPMEPLNFGSSYIVSNSANLKVMPKELKLSYRSPGEIQHFSKFYAGQMKEPIQLEITEKRHGTLVWDTEVKPVDLQLVAASAPPPFSGAAFVKENHRQLQARMGDLKGVLDDLQDNEVLTENEKELVEQEKTRQSKNEALLSMVEKKGDLALDVLFRSISERDPYLVSYLRQQNL.

The segment covering 1 to 23 (MEKKECPEKSSSSEEELPRRDSG) has biased composition (basic and acidic residues). Disordered regions lie at residues 1–28 (MEKKECPEKSSSSEEELPRRDSGSSRNI) and 113–133 (GDIPSVSEEQESSEGQDSGDI). The interval 161–296 (FLGPEGNVDV…FYAVLESPSF (136 aa)) is ZU5. Residues 161–446 (FLGPEGNVDV…LQLVAASAPP (286 aa)) form the FIIND domain. Residues 297–446 (SLMGILLRIA…LQLVAASAPP (150 aa)) are UPA. The 91-residue stretch at 446–536 (PPFSGAAFVK…YLVSYLRQQN (91 aa)) folds into the CARD domain.

Interacts with DPP9; leading to inhibit activation of the inflammasome. DPP9 acts via formation of a ternary complex, composed of a DPP9 homodimer, one full-length CARD8 protein, and one cleaved C-terminus of CARD8 (Caspase recruitment domain-containing protein 8, C-terminus). Interacts with DPP8; leading to inhibit activation of the inflammasome, probably via formation of a ternary complex with DPP8. Interacts with NLRP3. Interacts with IKBKG/NEMO. Interacts with DRAL. Binds to caspase-1 (CASP1), CARD16/pseudo-ICE and CARD18/ICEBERG. Interacts with NLRP2 (via NACHT domain). As to quaternary structure, interacts with the C-terminal part of CARD8 (Caspase recruitment domain-containing protein 8, C-terminus) in absence of pathogens and other damage-associated signals. In terms of assembly, interacts with the N-terminal part of CARD8 (Caspase recruitment domain-containing protein 8, N-terminus) in absence of pathogens and other damage-associated signals. Homomultimer; forms the CARD8 inflammasome polymeric complex, a filament composed of homopolymers of this form in response to pathogens and other damage-associated signals. The CARD8 inflammasome polymeric complex directly recruits pro-caspase-1 (proCASP1) independently of PYCARD/ASC. Interacts (via CARD domain) with CASP1 (via CARD domain); leading to CASP1 activation. Post-translationally, undergoes autocatalytic processing within the FIIND domain to generate the N-terminal and C-terminal parts, which are associated non-covalently in absence of pathogens and other damage-associated signals. Ubiquitinated by the N-end rule pathway in response to pathogens and other damage-associated signals, leading to its degradation by the proteasome and subsequent release of the cleaved C-terminal part of the protein (Caspase recruitment domain-containing protein 8, C-terminus), which polymerizes and forms the CARD8 inflammasome. In terms of processing, (Microbial infection) Proteolytic cleavage by HIV-1 protease in the disordered region and within the ZU5 region of the FIIND domain promotes ubiquitination of the N-terminal part by the N-end rule pathway and degradation by the proteasome, releasing the cleaved C-terminal part of the protein (Caspase recruitment domain-containing protein 8, C-terminus), which polymerizes and forms the CARD8 inflammasome. Post-translationally, undergoes less autocatalytic processing within the FIIND domain compared to isoform 5. In terms of tissue distribution, high expression in lung, ovary, testis and placenta. Lower expression in heart, kidney and liver. Also expressed in spleen, lymph node and bone marrow.

It localises to the cytoplasm. The protein resides in the nucleus. It is found in the inflammasome. With respect to regulation, CARD8 inflammasome is activated by HIV-1 protease activity: HIV-1 protease cleaves CARD8, promoting ubiquitination and degradation of the N-terminal part, releasing the cleaved C-terminal part of the protein (Caspase recruitment domain-containing protein 8, C-terminus), which polymerizes and forms the CARD8 inflammasome. CARD8 inflammasome is inhibited by DPP8 and DPP9, which sequester the C-terminal fragment of CARD8 (Caspase recruitment domain-containing protein 8, C-terminus) in a ternary complex, thereby preventing CARD8 oligomerization and activation. CARD8 inflammasome is activated by Val-boroPro (Talabostat, PT-100), an inhibitor of dipeptidyl peptidases DPP8 and DPP9. Val-boroPro relieves inhibition of DPP8 and/or DPP9 by inducing the proteasome-mediated destruction of the N-terminal part of CARD8, releasing its C-terminal part from autoinhibition. Indirectly activated by the pseudodipeptide CQ31. CQ31 directly inactivates the peptidases PEPD and XPNPEP1, leading to an accumulation of dipeptides that weaky inhibit DDP8 and DPP9, relieving DPP8- and/or DPP9-mediated inhibition of CARD8. Inflammasome sensor, which mediates inflammasome activation in response to various pathogen-associated signals, leading to subsequent pyroptosis of CD4(+) T-cells and macrophages. Inflammasomes are supramolecular complexes that assemble in the cytosol in response to pathogens and other damage-associated signals and play critical roles in innate immunity and inflammation. Acts as a recognition receptor (PRR): recognizes specific pathogens and other damage-associated signals, such as HIV-1 protease activity or Val-boroPro inhibitor, and mediates CARD8 inflammasome activation. In response to pathogen-associated signals, the N-terminal part of CARD8 is degraded by the proteasome, releasing the cleaved C-terminal part of the protein (Caspase recruitment domain-containing protein 8, C-terminus), which polymerizes to initiate the formation of the inflammasome complex: the CARD8 inflammasome directly recruits pro-caspase-1 (proCASP1) independently of PYCARD/ASC and promotes caspase-1 (CASP1) activation, which subsequently cleaves and activates inflammatory cytokines IL1B and IL18 and gasdermin-D (GSDMD), leading to pyroptosis. Ability to sense HIV-1 protease activity leads to the clearance of latent HIV-1 in patient CD4(+) T-cells after viral reactivation; in contrast, HIV-1 can evade CARD8-sensing when its protease remains inactive in infected cells prior to viral budding. Also acts as a negative regulator of the NLRP3 inflammasome. May also act as an inhibitor of NF-kappa-B activation. In terms of biological role, constitutes the precursor of the CARD8 inflammasome, which mediates autoproteolytic processing within the FIIND domain to generate the N-terminal and C-terminal parts, which are associated non-covalently in absence of pathogens and other damage-associated signals. Functionally, regulatory part that prevents formation of the CARD8 inflammasome: in absence of pathogens and other damage-associated signals, interacts with the C-terminal part of CARD8 (Caspase recruitment domain-containing protein 8, C-terminus), preventing activation of the CARD8 inflammasome. In response to pathogen-associated signals, this part is ubiquitinated by the N-end rule pathway and degraded by the proteasome, releasing the cleaved C-terminal part of the protein, which polymerizes and forms the CARD8 inflammasome. Its function is as follows. Constitutes the active part of the CARD8 inflammasome. In absence of pathogens and other damage-associated signals, interacts with the N-terminal part of CARD8 (Caspase recruitment domain-containing protein 8, N-terminus), preventing activation of the CARD8 inflammasome. In response to pathogen-associated signals, the N-terminal part of CARD8 is degraded by the proteasome, releasing this form, which polymerizes to form the CARD8 inflammasome complex: the CARD8 inflammasome complex then directly recruits pro-caspase-1 (proCASP1) and promotes caspase-1 (CASP1) activation, leading to gasdermin-D (GSDMD) cleavage and subsequent pyroptosis. This chain is Caspase recruitment domain-containing protein 8, found in Homo sapiens (Human).